We begin with the raw amino-acid sequence, 75 residues long: Large ribosomal subunit protein uL30 (75 aa).

Belongs to the universal ribosomal protein uL30 family. Part of the 50S ribosomal subunit.

The sequence is that of Large ribosomal subunit protein uL30 from Roseiflexus castenholzii (strain DSM 13941 / HLO8).